A 399-amino-acid polypeptide reads, in one-letter code: NADH-quinone oxidoreductase subunit D 2 (399 aa).

The interval 1-20 (MIASKESNSAATPATSAPTL) is disordered. Positions 9-20 (SAATPATSAPTL) are enriched in low complexity.

The protein belongs to the complex I 49 kDa subunit family. As to quaternary structure, NDH-1 is composed of 14 different subunits. Subunits NuoB, C, D, E, F, and G constitute the peripheral sector of the complex.

Its subcellular location is the cell inner membrane. The catalysed reaction is a quinone + NADH + 5 H(+)(in) = a quinol + NAD(+) + 4 H(+)(out). Its function is as follows. NDH-1 shuttles electrons from NADH, via FMN and iron-sulfur (Fe-S) centers, to quinones in the respiratory chain. The immediate electron acceptor for the enzyme in this species is believed to be ubiquinone. Couples the redox reaction to proton translocation (for every two electrons transferred, four hydrogen ions are translocated across the cytoplasmic membrane), and thus conserves the redox energy in a proton gradient. In Opitutus terrae (strain DSM 11246 / JCM 15787 / PB90-1), this protein is NADH-quinone oxidoreductase subunit D 2.